Reading from the N-terminus, the 454-residue chain is Asparagine--tRNA ligase (454 aa).

The protein belongs to the class-II aminoacyl-tRNA synthetase family. As to quaternary structure, homodimer.

The protein resides in the cytoplasm. It carries out the reaction tRNA(Asn) + L-asparagine + ATP = L-asparaginyl-tRNA(Asn) + AMP + diphosphate + H(+). The sequence is that of Asparagine--tRNA ligase from Microcystis aeruginosa (strain NIES-843 / IAM M-2473).